The following is a 170-amino-acid chain: Lipoprotein signal peptidase (170 aa).

The next 3 helical transmembrane spans lie at 9 to 29 (IGSV…KYLV), 72 to 92 (LFFL…ILKE), and 93 to 113 (TNKI…GNII). Active-site residues include aspartate 124 and aspartate 146. The helical transmembrane segment at 142-162 (FNFADSYVVIGITLFIIYDLF) threads the bilayer.

Belongs to the peptidase A8 family.

The protein localises to the cell inner membrane. It carries out the reaction Release of signal peptides from bacterial membrane prolipoproteins. Hydrolyzes -Xaa-Yaa-Zaa-|-(S,diacylglyceryl)Cys-, in which Xaa is hydrophobic (preferably Leu), and Yaa (Ala or Ser) and Zaa (Gly or Ala) have small, neutral side chains.. It functions in the pathway protein modification; lipoprotein biosynthesis (signal peptide cleavage). In terms of biological role, this protein specifically catalyzes the removal of signal peptides from prolipoproteins. This Borrelia hermsii (strain HS1 / DAH) protein is Lipoprotein signal peptidase.